The primary structure comprises 154 residues: Anti-sigma-E factor RseA (154 aa).

The residue at position 39 (threonine 39) is a Phosphothreonine; by PknB. Histidine 66, cysteine 70, and cysteine 73 together coordinate Zn(2+). Positions 104–154 (SEIPRCPPEGPSKGSSGGSSQGPPDGAAAGFGDRFADGDGGNRGRQSRVRR) are disordered. Low complexity predominate over residues 124–136 (QGPPDGAAAGFGD).

Belongs to the zinc-associated anti-sigma factor (ZAS) superfamily. In terms of assembly, interacts with cognate ECF RNA polymerase sigma factor SigE under reducing conditions; this inhibits the interaction of SigE with the RNA polymerase catalytic core. The cofactor is Zn(2+). Phosphorylated by PknB on Thr-39; can be dephosphorylated (at least in vitro) by PstP. Phosphorylation is the signal for subsequent degradation by the ClpC1-ClpP2 complex. In terms of processing, degraded following vancomycin treatment (surface stress) by a ClpC1-ClpP2 complex.

The protein localises to the cytoplasm. Functionally, an anti-sigma factor for extracytoplasmic function (ECF) sigma factor SigE. ECF sigma factors are held in an inactive form by an anti-sigma factor. In Mycobacterium tuberculosis (strain ATCC 25618 / H37Rv), this protein is Anti-sigma-E factor RseA (rseA).